The primary structure comprises 33 residues: Gastrin (33 aa).

Gln-1 bears the Pyrrolidone carboxylic acid mark. Residue Tyr-28 is modified to Sulfotyrosine. Residue Phe-33 is modified to Phenylalanine amide.

It belongs to the gastrin/cholecystokinin family. Post-translationally, sulfation enhances proteolytic processing, and blocks peptide degradation. Levels of sulfation differ between proteolytically-cleaved gastrins and between tissues.

Its subcellular location is the secreted. Functionally, gastrin stimulates the stomach mucosa to produce and secrete hydrochloric acid and the pancreas to secrete its digestive enzymes. It also stimulates smooth muscle contraction and increases blood circulation and water secretion in the stomach and intestine. The chain is Gastrin (GAST) from Macropus giganteus (Eastern gray kangaroo).